Reading from the N-terminus, the 164-residue chain is T-cell surface glycoprotein CD3 zeta chain (164 aa).

An N-terminal signal peptide occupies residues 1 to 21 (MKWKVSVLACILHVRFPGAEA). Gln22 is subject to Blocked amino end (Gln). Over 22 to 30 (QSFGLLDPK) the chain is Extracellular. The helical transmembrane segment at 31–51 (LCYLLDGILFIYGVIITALYL) threads the bilayer. At 52–164 (RAKFSRSAET…ALHMQTLAPR (113 aa)) the chain is on the cytoplasmic side. Position 58 is a phosphoserine (Ser58). ITAM domains are found at residues 61–89 (TAAN…LEKK), 100–128 (QQRR…EIGT), and 131–159 (ERRR…LHMQ). A phosphotyrosine mark is found at Tyr72 and Tyr83. Basic and acidic residues predominate over residues 87–96 (EKKRARDPEM). Positions 87–111 (EKKRARDPEMGGKQQRRRNPQEGVY) are disordered. Residues Tyr111, Tyr123, Tyr142, and Tyr153 each carry the phosphotyrosine modification. The segment at 124-143 (SEIGTKGERRRGKGHDGLYQ) is disordered.

It belongs to the CD3Z/FCER1G family. As to quaternary structure, the TCR-CD3 complex is composed of a CD3D/CD3E and a CD3G/CD3E heterodimers that preferentially associate with TCRalpha and TCRbeta, respectively, to form TCRalpha/CD3E/CD3G and TCRbeta/CD3G/CD3E trimers. In turn, the hexamer interacts with CD3Z homodimer to form the TCR-CD3 complex. Alternatively, TCRalpha and TCRbeta can be replaced by TCRgamma and TCRdelta. Interacts with SLA. Interacts with SLA2. Interacts with TRAT1. Interacts with DOCK2. Interacts with SHB. Interacts with ZAP70. Interacts (tyrosine phosphorylated) with SHC1 (via SH2 domain). Interacts with PTPRC. Interacts with CRK; this interaction regulates CD3Z phosphorylation. Interacts (on T cell side) with CD81, ICAM1 and CD9 at immunological synapses between antigen-presenting cells and T cells. Interacts with CD160. Interacts with LY6E. Interacts with LY6E. The signaling subunit of immunoglobulin gamma (IgG) Fc receptor complex. As a homodimer or a heterodimer with FCER1G, associates with the ligand binding subunit FCGR3A (via transmembrane domain); this interaction is a prerequisite for Fc receptor complex expression on the cell surface. Interacts with CD5. Post-translationally, phosphorylated on Tyr residues after T-cell receptor triggering by LCK in association with CD4/CD8. As to expression, CD3Z is expressed in normal lymphoid tissue and in peripheral blood mononuclear cells (PBMCs). Expressed also in retinal ganglion cells.

Its subcellular location is the cell membrane. Part of the TCR-CD3 complex present on T-lymphocyte cell surface that plays an essential role in adaptive immune response. When antigen presenting cells (APCs) activate T-cell receptor (TCR), TCR-mediated signals are transmitted across the cell membrane by the CD3 chains CD3D, CD3E, CD3G and CD3Z. All CD3 chains contain immunoreceptor tyrosine-based activation motifs (ITAMs) in their cytoplasmic domain. Upon TCR engagement, these motifs become phosphorylated by Src family protein tyrosine kinases LCK and FYN, resulting in the activation of downstream signaling pathways. CD3Z ITAMs phosphorylation creates multiple docking sites for the protein kinase ZAP70 leading to ZAP70 phosphorylation and its conversion into a catalytically active enzyme. Plays an important role in intrathymic T-cell differentiation. Additionally, participates in the activity-dependent synapse formation of retinal ganglion cells (RGCs) in both the retina and dorsal lateral geniculate nucleus (dLGN). This chain is T-cell surface glycoprotein CD3 zeta chain (Cd247), found in Mus musculus (Mouse).